We begin with the raw amino-acid sequence, 345 residues long: D-fructose 1,6-bisphosphatase class 2/sedoheptulose 1,7-bisphosphatase (345 aa).

The Mn(2+) site is built by aspartate 33, glutamate 57, aspartate 97, and glutamate 100. Substrate-binding positions include 100 to 102 (EGT), tyrosine 131, 176 to 178 (RPR), and 198 to 200 (DGD). Glutamate 225 serves as a coordination point for Mn(2+).

It belongs to the FBPase class 2 family. In terms of assembly, homotetramer. Mn(2+) is required as a cofactor.

The catalysed reaction is beta-D-fructose 1,6-bisphosphate + H2O = beta-D-fructose 6-phosphate + phosphate. It catalyses the reaction D-sedoheptulose 1,7-bisphosphate + H2O = D-sedoheptulose 7-phosphate + phosphate. It functions in the pathway carbohydrate biosynthesis; Calvin cycle. Its activity is regulated as follows. Inhibited by AMP and slightly innibited by hydrogen peroxyde. Functionally, catalyzes the hydrolysis of fructose 1,6-bisphosphate (Fru 1,6-P2) and sedoheptulose 1,7-bisphosphate (Sed 1,7-P2) to fructose 6-phosphate and sedoheptulose 7-phosphate, respectively. The polypeptide is D-fructose 1,6-bisphosphatase class 2/sedoheptulose 1,7-bisphosphatase (Synechococcus elongatus (strain ATCC 33912 / PCC 7942 / FACHB-805) (Anacystis nidulans R2)).